The following is a 399-amino-acid chain: LIM/homeobox protein Lhx5 (399 aa).

LIM zinc-binding domains lie at 3-61 (VHCA…RRFG) and 62-125 (TKCA…ASAI). Disordered regions lie at residues 136–185 (CTDR…GPRT) and 301–399 (PSSQ…NTVW). The segment covering 151-167 (DDTKETDNSTSSDKDTN) has biased composition (basic and acidic residues). The segment at residues 180 to 239 (RRGPRTTIKAKQLETLKAAFVATPKPTRHIREQLAQETGLNMRVIQVWFQNRRSKERRMK) is a DNA-binding region (homeobox).

The protein localises to the nucleus. Its function is as follows. Probably involved in the patterning of the nervous system, in particular in the early specification of the diencephalon. This Danio rerio (Zebrafish) protein is LIM/homeobox protein Lhx5 (lhx5).